The primary structure comprises 265 residues: Hydroxyethylthiazole kinase (265 aa).

Met-43 is a binding site for substrate. Arg-119 and Ser-165 together coordinate ATP. Residue Ala-192 participates in substrate binding.

It belongs to the Thz kinase family. The cofactor is Mg(2+).

It catalyses the reaction 5-(2-hydroxyethyl)-4-methylthiazole + ATP = 4-methyl-5-(2-phosphooxyethyl)-thiazole + ADP + H(+). Its pathway is cofactor biosynthesis; thiamine diphosphate biosynthesis; 4-methyl-5-(2-phosphoethyl)-thiazole from 5-(2-hydroxyethyl)-4-methylthiazole: step 1/1. Functionally, catalyzes the phosphorylation of the hydroxyl group of 4-methyl-5-beta-hydroxyethylthiazole (THZ). The sequence is that of Hydroxyethylthiazole kinase from Haemophilus influenzae (strain 86-028NP).